Here is a 90-residue protein sequence, read N- to C-terminus: Small ribosomal subunit protein uS15c (90 aa).

This sequence belongs to the universal ribosomal protein uS15 family. Part of the 30S ribosomal subunit.

The protein resides in the plastid. The protein localises to the chloroplast. This is Small ribosomal subunit protein uS15c (rps15) from Secale cereale (Rye).